The chain runs to 250 residues: Ubiquinone/menaquinone biosynthesis C-methyltransferase UbiE (250 aa).

Residues T73, D94, 122-123 (NS), and S139 each bind S-adenosyl-L-methionine.

It belongs to the class I-like SAM-binding methyltransferase superfamily. MenG/UbiE family.

It catalyses the reaction a 2-demethylmenaquinol + S-adenosyl-L-methionine = a menaquinol + S-adenosyl-L-homocysteine + H(+). The catalysed reaction is a 2-methoxy-6-(all-trans-polyprenyl)benzene-1,4-diol + S-adenosyl-L-methionine = a 5-methoxy-2-methyl-3-(all-trans-polyprenyl)benzene-1,4-diol + S-adenosyl-L-homocysteine + H(+). It participates in quinol/quinone metabolism; menaquinone biosynthesis; menaquinol from 1,4-dihydroxy-2-naphthoate: step 2/2. Its pathway is cofactor biosynthesis; ubiquinone biosynthesis. In terms of biological role, methyltransferase required for the conversion of demethylmenaquinol (DMKH2) to menaquinol (MKH2) and the conversion of 2-polyprenyl-6-methoxy-1,4-benzoquinol (DDMQH2) to 2-polyprenyl-3-methyl-6-methoxy-1,4-benzoquinol (DMQH2). The polypeptide is Ubiquinone/menaquinone biosynthesis C-methyltransferase UbiE (Wigglesworthia glossinidia brevipalpis).